The sequence spans 280 residues: uncharacterized protein (280 aa).

Disordered regions lie at residues 20-41 (DVKKSQQQQQQQPQAPPQQQQQ), 170-199 (INSPPPPQEEEKPQLSKKEEPEWLKGKDKA), and 251-280 (GNSKPYTSSNATNKPFTTASKSTNSYSFSF). The segment covering 25–41 (QQQQQQQPQAPPQQQQQ) has biased composition (low complexity). Over residues 178 to 199 (EEEKPQLSKKEEPEWLKGKDKA) the composition is skewed to basic and acidic residues.

This is an uncharacterized protein from Dictyostelium discoideum (Social amoeba).